We begin with the raw amino-acid sequence, 619 residues long: Telomere repeat-binding protein 3 (619 aa).

The 80-residue stretch at 324 to 403 (VKLSIKSFRI…LDNLGFTLEP (80 aa)) folds into the Ubiquitin-like domain. Positions 504 to 563 (AQRRTRRPFSVTEVEALVQAVEELGTGRWRDVKLRAFEDADHRTYVDLKDKWKTLVHTAS) constitute an HTH myb-type domain. A DNA-binding region (H-T-H motif) is located at residues 532-559 (WRDVKLRAFEDADHRTYVDLKDKWKTLV). Residues 593–619 (QGKHQARGASKDPDMNRGGAFESGVSV) are disordered.

In terms of assembly, homodimer and heterodimer with TRP1. As to expression, expressed ubiquitously. Highest expression in flowers and roots.

The protein resides in the nucleus. In terms of biological role, binds specifically to the plant telomeric double-stranded DNA sequences. At least 2 repeats of telomeric sequences are required for binding. Induces DNA bending. The protein is Telomere repeat-binding protein 3 (TRP3) of Arabidopsis thaliana (Mouse-ear cress).